A 795-amino-acid chain; its full sequence is Phenylalanine--tRNA ligase beta subunit (795 aa).

Residues 39–148 (AAKFNGVLVG…SDAPVGTDLR (110 aa)) form the tRNA-binding domain. A B5 domain is found at 401–476 (PKVTEVRLRR…RVYGYNSIPN (76 aa)). Residues D454, D460, E463, and E464 each coordinate Mg(2+). The FDX-ACB domain maps to 701 to 794 (SKFPSNRRDI…LAEQFNASLR (94 aa)).

Belongs to the phenylalanyl-tRNA synthetase beta subunit family. Type 1 subfamily. Tetramer of two alpha and two beta subunits. Mg(2+) is required as a cofactor.

The protein localises to the cytoplasm. It carries out the reaction tRNA(Phe) + L-phenylalanine + ATP = L-phenylalanyl-tRNA(Phe) + AMP + diphosphate + H(+). The protein is Phenylalanine--tRNA ligase beta subunit of Pseudoalteromonas translucida (strain TAC 125).